Reading from the N-terminus, the 372-residue chain is Glutamate 5-kinase (372 aa).

Lysine 9 lines the ATP pocket. Substrate-binding residues include serine 49, aspartate 136, and asparagine 148. Residues 168–169 and 210–216 each bind ATP; these read TD and TGGMKSK. Positions 276 to 353 constitute a PUA domain; the sequence is AGSIEIDSGA…EEALSLTKRS (78 aa).

This sequence belongs to the glutamate 5-kinase family.

It localises to the cytoplasm. The enzyme catalyses L-glutamate + ATP = L-glutamyl 5-phosphate + ADP. It functions in the pathway amino-acid biosynthesis; L-proline biosynthesis; L-glutamate 5-semialdehyde from L-glutamate: step 1/2. Its function is as follows. Catalyzes the transfer of a phosphate group to glutamate to form L-glutamate 5-phosphate. The polypeptide is Glutamate 5-kinase (Shouchella clausii (strain KSM-K16) (Alkalihalobacillus clausii)).